The primary structure comprises 343 residues: Trace amine-associated receptor 3 (343 aa).

Topologically, residues 1–35 are extracellular; sequence MDLIYIPEDLSSCPKFGNKSCPPTNRSFRVRMIMY. 2 N-linked (GlcNAc...) asparagine glycosylation sites follow: Asn18 and Asn25. 2 cysteine pairs are disulfide-bonded: Cys21/Cys185 and Cys104/Cys189. Residues 36 to 56 form a helical membrane-spanning segment; it reads LFMTGAMVITIFGNLVIIISI. At 57–68 the chain is on the cytoplasmic side; sequence SHFKQLHSPTNF. A helical transmembrane segment spans residues 69 to 89; the sequence is LILSMATTDFLLGFVIMPYSM. The Extracellular segment spans residues 90–150; that stretch reads VRSVESCWYF…TTMTVSMIKR (61 aa). Residues 151–168 form a helical membrane-spanning segment; that stretch reads LLAFCWAAPALFSFGLVL. Over 169-172 the chain is Cytoplasmic; sequence SEAN. The tract at residues 173–186 is extracellular Loop 2 (ECL2); it reads VSGMQSYEILVACF. A helical membrane pass occupies residues 173-193; that stretch reads VSGMQSYEILVACFNFCALTF. Residues 194 to 198 lie on the Extracellular side of the membrane; the sequence is NKFWG. Residues 199–223 form a helical membrane-spanning segment; that stretch reads TILFTTCFFTPGSIMVGIYGKIFIV. Residues 224–257 are Cytoplasmic-facing; sequence SRRHARALSDMPANTKGAVGKNLSKKKDRKAAKT. A helical membrane pass occupies residues 258–278; that stretch reads LGIVMGVFLACWLPCFLAVLI. The Extracellular segment spans residues 279-287; it reads DPYLDYSTP. A helical transmembrane segment spans residues 288–308; it reads IIVLDLLVWLGYFNSTCNPLI. The Cytoplasmic portion of the chain corresponds to 309 to 343; that stretch reads HGFFYPWFRKALQFIVSGKIFRSNSDTANLFPEAH.

It belongs to the G-protein coupled receptor 1 family. In terms of tissue distribution, specifically expressed in neurons of the olfactory epithelium.

It is found in the cell membrane. Functionally, olfactory receptor activated by several primary trace amines, including isoamylamine. Activated by isoamylamine and cyclohexylamine, but not to the corresponding alcohols, isoamylalcohol and cyclohexanol. This receptor is probably mediated by the G(s)-class of G-proteins which activate adenylate cyclase. The chain is Trace amine-associated receptor 3 from Mus musculus (Mouse).